Consider the following 139-residue polypeptide: Small ribosomal subunit protein uS12m (139 aa).

The N-terminal 29 residues, 1-29 (MSWPGLLYGLTTSLSRGLALAPQLWAARS), are a transit peptide targeting the mitochondrion.

Belongs to the universal ribosomal protein uS12 family. In terms of assembly, component of the mitochondrial ribosome small subunit (28S) which comprises a 12S rRNA and about 30 distinct proteins.

Its subcellular location is the mitochondrion. The polypeptide is Small ribosomal subunit protein uS12m (Mrps12) (Mus musculus (Mouse)).